Consider the following 174-residue polypeptide: C-type lectin domain family 2 member A (174 aa).

Topologically, residues 1 to 27 (MINPELRDGRADGFIHRIVPKLIQNWK) are cytoplasmic. Residues 28-48 (IGLMCFLSIIITTVCIIMIAT) form a helical; Signal-anchor for type II membrane protein membrane-spanning segment. Residues 49 to 174 (WSKHAKPVAC…WICSKPKYFL (126 aa)) lie on the Extracellular side of the membrane. A disulfide bridge connects residues C58 and C69. Residues 65 to 174 (VRDKCFYFSD…WICSKPKYFL (110 aa)) form the C-type lectin domain. N-linked (GlcNAc...) asparagine glycans are attached at residues N78, N130, and N143. A disulfide bridge connects residues C86 and C167.

In terms of assembly, homodimer; non-disulfide-linked. Interacts with KLRB1. Interacts with KLRF2. N-glycosylated. As to expression, mainly expressed in skin. Also expressed in keratinocytes, spleen, thymus, small intestine, peripheral blood monocytes, bone marrow, ovary, testis and skin. High expression in CD8(+), B-lymphocytes and naive CD4(+) T-cells. Restricted mostly to proliferating lymphocytes. Not detected in myeloid leukocytes or natural killer (NK) cells.

The protein localises to the cell membrane. Its function is as follows. Membrane-bound protein expressed mainly on keratinocytes which acts as a ligand to stimulate the activating receptor NKp65/KLRF2, expressed on the surface of natural killer (NK) cells. Facilitates thereby dedicated immune recognition of keratinocytes leading to natural killer cell mediated cytotoxicity. Also plays a role in modulating the extent of T-cell expansion. The polypeptide is C-type lectin domain family 2 member A (CLEC2A) (Homo sapiens (Human)).